We begin with the raw amino-acid sequence, 225 residues long: J-type co-chaperone jac1, mitochondrial (225 aa).

The transit peptide at 1–49 (MLKQAGNQSFRPFISFAQKSLFNRQITGNHWIFARFKFYPLNKIVNYNH) directs the protein to the mitochondrion. Residues 61 to 137 (NFYKQFEGDI…LTRAEYILQL (77 aa)) form the J domain. The HSP70 binding signature appears at 98-100 (HPD).

This sequence belongs to the HscB family. In terms of assembly, interacts with ssc1.

It localises to the mitochondrion matrix. Functionally, co-chaperone required for the assembly of iron-sulfur (Fe/S) clusters in mitochondria. Stimulates the ATPase activity of the mitochondrial Hsp70 chaperone ssc1, to mediate the transfer of iron-sulfur clusters from isu1 to grx5. This is J-type co-chaperone jac1, mitochondrial from Schizosaccharomyces pombe (strain 972 / ATCC 24843) (Fission yeast).